The primary structure comprises 480 residues: Protein nucleotidyltransferase YdiU (480 aa).

Residues G86, G88, R89, K109, D121, G122, R172, and R179 each contribute to the ATP site. The Proton acceptor role is filled by D248. Mg(2+) contacts are provided by N249 and D258. Residue D258 coordinates ATP.

This sequence belongs to the SELO family. Mg(2+) is required as a cofactor. It depends on Mn(2+) as a cofactor.

It carries out the reaction L-seryl-[protein] + ATP = 3-O-(5'-adenylyl)-L-seryl-[protein] + diphosphate. The enzyme catalyses L-threonyl-[protein] + ATP = 3-O-(5'-adenylyl)-L-threonyl-[protein] + diphosphate. It catalyses the reaction L-tyrosyl-[protein] + ATP = O-(5'-adenylyl)-L-tyrosyl-[protein] + diphosphate. The catalysed reaction is L-histidyl-[protein] + UTP = N(tele)-(5'-uridylyl)-L-histidyl-[protein] + diphosphate. It carries out the reaction L-seryl-[protein] + UTP = O-(5'-uridylyl)-L-seryl-[protein] + diphosphate. The enzyme catalyses L-tyrosyl-[protein] + UTP = O-(5'-uridylyl)-L-tyrosyl-[protein] + diphosphate. Functionally, nucleotidyltransferase involved in the post-translational modification of proteins. It can catalyze the addition of adenosine monophosphate (AMP) or uridine monophosphate (UMP) to a protein, resulting in modifications known as AMPylation and UMPylation. In Salmonella paratyphi A (strain ATCC 9150 / SARB42), this protein is Protein nucleotidyltransferase YdiU.